Here is a 238-residue protein sequence, read N- to C-terminus: Probable transcriptional regulatory protein CTA_0499 (238 aa).

Residues 1 to 21 (MAGHSKWANTKHRKERADHKK) form a disordered region. Residues 9–21 (NTKHRKERADHKK) are compositionally biased toward basic residues.

Belongs to the TACO1 family.

It is found in the cytoplasm. The sequence is that of Probable transcriptional regulatory protein CTA_0499 from Chlamydia trachomatis serovar A (strain ATCC VR-571B / DSM 19440 / HAR-13).